A 93-amino-acid chain; its full sequence is DNA-directed RNA polymerase subunit omega (93 aa).

It belongs to the RNA polymerase subunit omega family. The RNAP catalytic core consists of 2 alpha, 1 beta, 1 beta' and 1 omega subunit. When a sigma factor is associated with the core the holoenzyme is formed, which can initiate transcription.

The catalysed reaction is RNA(n) + a ribonucleoside 5'-triphosphate = RNA(n+1) + diphosphate. Functionally, promotes RNA polymerase assembly. Latches the N- and C-terminal regions of the beta' subunit thereby facilitating its interaction with the beta and alpha subunits. The protein is DNA-directed RNA polymerase subunit omega of Shewanella loihica (strain ATCC BAA-1088 / PV-4).